The following is a 102-amino-acid chain: Small ribosomal subunit protein uS10 (102 aa).

This sequence belongs to the universal ribosomal protein uS10 family. Part of the 30S ribosomal subunit.

Its function is as follows. Involved in the binding of tRNA to the ribosomes. This Bifidobacterium longum (strain DJO10A) protein is Small ribosomal subunit protein uS10.